Consider the following 414-residue polypeptide: Putative competence-damage inducible protein (414 aa).

It belongs to the CinA family.

In Moorella thermoacetica (strain ATCC 39073 / JCM 9320), this protein is Putative competence-damage inducible protein.